The chain runs to 416 residues: Proline-serine-threonine phosphatase-interacting protein 1 (416 aa).

Positions 5–264 (LQFKDAFWCR…TLEGCSIDAD (260 aa)) constitute an F-BAR domain. A coiled-coil region spans residues 166–212 (HQKQVEKSQNKARQCKDSATEAERVYRQSIAQLEKVRAEWEQEHRTT). The residue at position 318 (serine 318) is a Phosphoserine. Tyrosine 345 carries the post-translational modification Phosphotyrosine. An SH3 domain is found at 359-416 (SPAQEYRALYDYTAQNPDELDLSAGDILEVILEGEDGWWTVERNGQRGFVPGSYLEKL).

In terms of assembly, homodimer. Homotrimer. Interacts (via coiled-coil domain) with CD2AP, PTPN12 and PTPN18. Interacts (via SH3 domain) with ABL1 and WAS. Interacts (via SH3 and coiled-coil domains) with MEFV (via B-box zinc finger); the interaction allows binding of MEFV to PYCARD and facilitates formation of PYCARD pyroptosomes. Interacts with CD2, DNM2 and FASLG. Post-translationally, dephosphorylated on Tyr-345 by PTPN18, this event negatively regulates the association of PSTPIP1 with SH2 domain-containing proteins as tyrosine kinase. Phosphorylation of Tyr-345 is probably required for subsequent phosphorylation at other tyrosine residues. Phosphorylation is induced by activation of the EGFR and PDGFR in a ABL1 dependent manner. The phosphorylation regulates the interaction with WAS and with MEFV. In terms of tissue distribution, highly expressed in the peripheral blood leukocytes, granulocytes and monocytes, namely in T-cells and natural killer cells, and in spleen. Weakly expressed in the thymus, small intestine, lung and placenta.

Its subcellular location is the cytoplasm. It localises to the cell membrane. The protein localises to the cell projection. The protein resides in the uropodium. It is found in the cytoskeleton. Its subcellular location is the perinuclear region. It localises to the lamellipodium. The protein localises to the cleavage furrow. In terms of biological role, involved in regulation of the actin cytoskeleton. May regulate WAS actin-bundling activity. Bridges the interaction between ABL1 and PTPN18 leading to ABL1 dephosphorylation. May play a role as a scaffold protein between PTPN12 and WAS and allow PTPN12 to dephosphorylate WAS. Has the potential to physically couple CD2 and CD2AP to WAS. Acts downstream of CD2 and CD2AP to recruit WAS to the T-cell:APC contact site so as to promote the actin polymerization required for synapse induction during T-cell activation. Down-regulates CD2-stimulated adhesion through the coupling of PTPN12 to CD2. Also has a role in innate immunity and the inflammatory response. Recruited to inflammasomes by MEFV. Induces formation of pyroptosomes, large supramolecular structures composed of oligomerized PYCARD dimers which form prior to inflammatory apoptosis. Binding to MEFV allows MEFV to bind to PYCARD and facilitates pyroptosome formation. Regulates endocytosis and cell migration in neutrophils. The chain is Proline-serine-threonine phosphatase-interacting protein 1 (PSTPIP1) from Homo sapiens (Human).